We begin with the raw amino-acid sequence, 407 residues long: Chorismate synthase (407 aa).

Positions 40 and 46 each coordinate NADP(+). FMN contacts are provided by residues 138-140 (RAS) and 259-260 (QA). Positions 275–284 (RRGSRAHDEM) are enriched in basic and acidic residues. The segment at 275 to 308 (RRGSRAHDEMYPGTDGVVRSTNRAGGLEGGMTNG) is disordered. Residues G303, 318-322 (KPIST), and R344 each bind FMN.

The protein belongs to the chorismate synthase family. Homotetramer. It depends on FMNH2 as a cofactor.

The catalysed reaction is 5-O-(1-carboxyvinyl)-3-phosphoshikimate = chorismate + phosphate. Its pathway is metabolic intermediate biosynthesis; chorismate biosynthesis; chorismate from D-erythrose 4-phosphate and phosphoenolpyruvate: step 7/7. Functionally, catalyzes the anti-1,4-elimination of the C-3 phosphate and the C-6 proR hydrogen from 5-enolpyruvylshikimate-3-phosphate (EPSP) to yield chorismate, which is the branch point compound that serves as the starting substrate for the three terminal pathways of aromatic amino acid biosynthesis. This reaction introduces a second double bond into the aromatic ring system. This chain is Chorismate synthase, found in Mycobacterium ulcerans (strain Agy99).